The primary structure comprises 230 residues: Ropporin-1-like protein (230 aa).

An RIIa domain is found at 17–54 (PELPDILKQFTKAAIRTQPADVLQWSAGYFSALSRGDP).

Belongs to the ropporin family. Component of the axonemal radial spoke complex 1 (RS1), at least composed of spoke head proteins RSPH1, RSPH3, RSPH9 and the cilia-specific component RSPH4A or sperm-specific component RSPH6A, spoke stalk proteins RSPH14, DNAJB13, DYDC1, ROPN1L and NME5, and the anchor protein IQUB. May interact with AKAP3. Interacts with FSCB; the interaction increases upon spermatozoa capacitation conditions. Interacts with CFAP61. Sumoylated, sumoylation decreases upon spermatozoa capacitation conditions.

The protein localises to the cell projection. It localises to the cilium. Its subcellular location is the flagellum. Its function is as follows. Functions as part of axonemal radial spoke complexes that play an important part in the motility of sperm and cilia. Important for male fertility. With ROPN1, involved in fibrous sheath integrity and sperm motility, plays a role in PKA-dependent signaling processes required for spermatozoa capacitation. This is Ropporin-1-like protein (ROPN1L) from Macaca fascicularis (Crab-eating macaque).